The sequence spans 141 residues: ATP synthase epsilon chain, chloroplastic (141 aa).

This sequence belongs to the ATPase epsilon chain family. As to quaternary structure, F-type ATPases have 2 components, F(1) - the catalytic core - and F(0) - the membrane proton channel. F(1) has five subunits: alpha(3), beta(3), gamma(1), delta(1), epsilon(1). F(0) has four main subunits: a(1), b(1), b'(1) and c(10-14). The alpha and beta chains form an alternating ring which encloses part of the gamma chain. F(1) is attached to F(0) by a central stalk formed by the gamma and epsilon chains, while a peripheral stalk is formed by the delta, b and b' chains.

It is found in the plastid. The protein resides in the chloroplast thylakoid membrane. In terms of biological role, f(1)F(0) ATP synthase produces ATP from ADP in the presence of a proton or sodium gradient. F-type ATPases consist of two structural domains, F(1) containing the extramembraneous catalytic core and F(0) containing the membrane proton channel, linked together by a central stalk and a peripheral stalk. During catalysis, ATP synthesis in the catalytic domain of F(1) is coupled via a rotary mechanism of the central stalk subunits to proton translocation. This is ATP synthase epsilon chain, chloroplastic from Chlamydomonas reinhardtii (Chlamydomonas smithii).